We begin with the raw amino-acid sequence, 370 residues long: Sensor protein GtcS (370 aa).

2 consecutive transmembrane segments (helical) span residues 2–22 and 40–60; these read ITAYILFTVTVGVTNSIVFYL and AWIVAWRLMEMVIFALSVYLY. The region spanning 66–118 is the HAMP domain; that stretch reads KRITGPLEKITDAIQKMREGEFAQRLCFKADYELTLIQEHFNEMVAHLEKTEA. One can recognise a Histidine kinase domain in the interval 133-355; that stretch reads DLSHDFKTPI…RLENDLPYRL (223 aa).

It localises to the cell membrane. The catalysed reaction is ATP + protein L-histidine = ADP + protein N-phospho-L-histidine.. Member of the two-component regulatory system GtcS/GtcR which may act in the control of the transcription of the grs operon which encodes the multienzymes involved in the biosynthesis of the peptide antibiotic gramicidin S. Probably activates GtcR by phosphorylation. This chain is Sensor protein GtcS (gtcS), found in Aneurinibacillus migulanus (Bacillus migulanus).